The following is a 252-amino-acid chain: Trans-aconitate 2-methyltransferase (252 aa).

This sequence belongs to the methyltransferase superfamily. Tam family.

It is found in the cytoplasm. The enzyme catalyses trans-aconitate + S-adenosyl-L-methionine = (E)-3-(methoxycarbonyl)pent-2-enedioate + S-adenosyl-L-homocysteine. Its function is as follows. Catalyzes the S-adenosylmethionine monomethyl esterification of trans-aconitate. In Escherichia fergusonii (strain ATCC 35469 / DSM 13698 / CCUG 18766 / IAM 14443 / JCM 21226 / LMG 7866 / NBRC 102419 / NCTC 12128 / CDC 0568-73), this protein is Trans-aconitate 2-methyltransferase.